We begin with the raw amino-acid sequence, 1357 residues long: DNA-directed RNA polymerase subunit beta (1357 aa).

The protein belongs to the RNA polymerase beta chain family. The RNAP catalytic core consists of 2 alpha, 1 beta, 1 beta' and 1 omega subunit. When a sigma factor is associated with the core the holoenzyme is formed, which can initiate transcription.

It catalyses the reaction RNA(n) + a ribonucleoside 5'-triphosphate = RNA(n+1) + diphosphate. Functionally, DNA-dependent RNA polymerase catalyzes the transcription of DNA into RNA using the four ribonucleoside triphosphates as substrates. In Acinetobacter baumannii (strain ATCC 17978 / DSM 105126 / CIP 53.77 / LMG 1025 / NCDC KC755 / 5377), this protein is DNA-directed RNA polymerase subunit beta.